A 332-amino-acid polypeptide reads, in one-letter code: 2,3-diketo-L-gulonate reductase (332 aa).

H44 acts as the Proton donor in catalysis. NAD(+) contacts are provided by residues 168 to 174, 224 to 225, and 304 to 306; these read ITMVDMS, WK, and GHE.

Belongs to the LDH2/MDH2 oxidoreductase family. DlgD subfamily. Homodimer.

The protein resides in the cytoplasm. The enzyme catalyses 3-dehydro-L-gulonate + NAD(+) = 2,3-dioxo-L-gulonate + NADH + H(+). It catalyses the reaction 3-dehydro-L-gulonate + NADP(+) = 2,3-dioxo-L-gulonate + NADPH + H(+). Catalyzes the reduction of 2,3-diketo-L-gulonate in the presence of NADH, to form 3-keto-L-gulonate. The chain is 2,3-diketo-L-gulonate reductase from Escherichia coli O8 (strain IAI1).